We begin with the raw amino-acid sequence, 334 residues long: Cobalt-precorrin-5B C(1)-methyltransferase (334 aa).

It belongs to the CbiD family.

It catalyses the reaction Co-precorrin-5B + S-adenosyl-L-methionine = Co-precorrin-6A + S-adenosyl-L-homocysteine. It functions in the pathway cofactor biosynthesis; adenosylcobalamin biosynthesis; cob(II)yrinate a,c-diamide from sirohydrochlorin (anaerobic route): step 6/10. Its function is as follows. Catalyzes the methylation of C-1 in cobalt-precorrin-5B to form cobalt-precorrin-6A. In Methanoregula boonei (strain DSM 21154 / JCM 14090 / 6A8), this protein is Cobalt-precorrin-5B C(1)-methyltransferase.